Reading from the N-terminus, the 122-residue chain is Basic phospholipase A2 LmTX-I (122 aa).

6 disulfides stabilise this stretch: Cys-26–Cys-115, Cys-28–Cys-44, Cys-43–Cys-95, Cys-49–Cys-122, Cys-50–Cys-88, and Cys-75–Cys-86. The Ca(2+) site is built by Tyr-27, Gly-29, and Gly-31. The active site involves His-47. Ca(2+) is bound at residue Asp-48. The active site involves Asp-89.

As to quaternary structure, monomer. It depends on Ca(2+) as a cofactor. As to expression, expressed by the venom gland.

It localises to the secreted. It carries out the reaction a 1,2-diacyl-sn-glycero-3-phosphocholine + H2O = a 1-acyl-sn-glycero-3-phosphocholine + a fatty acid + H(+). Inhibited by Mn(2+), Mg(2+), Zn(2+) and Cu(2+). In terms of biological role, snake venom phospholipase A2 (PLA2) that displays neurotoxic and myotoxic activities. Induces inflammatory edema by mechanisms involving mast cell activation and arachidonic acid metabolites. Increases plasma creatine kinase activity. PLA2 catalyzes the calcium-dependent hydrolysis of the 2-acyl groups in 3-sn-phosphoglycerides. This Lachesis muta muta (Bushmaster) protein is Basic phospholipase A2 LmTX-I.